A 350-amino-acid polypeptide reads, in one-letter code: Histidinol-phosphate aminotransferase (350 aa).

At lysine 207 the chain carries N6-(pyridoxal phosphate)lysine.

The protein belongs to the class-II pyridoxal-phosphate-dependent aminotransferase family. Histidinol-phosphate aminotransferase subfamily. In terms of assembly, homodimer. The cofactor is pyridoxal 5'-phosphate.

It catalyses the reaction L-histidinol phosphate + 2-oxoglutarate = 3-(imidazol-4-yl)-2-oxopropyl phosphate + L-glutamate. It functions in the pathway amino-acid biosynthesis; L-histidine biosynthesis; L-histidine from 5-phospho-alpha-D-ribose 1-diphosphate: step 7/9. The sequence is that of Histidinol-phosphate aminotransferase from Streptococcus thermophilus (strain ATCC BAA-491 / LMD-9).